Consider the following 463-residue polypeptide: Histone acetyltransferase mst1 (463 aa).

The Tudor-knot domain occupies 22-74 (VYKSKVFAFKDGEYRKAEILMIQKRTRGVVYYVHYNDYNKRLDEWITIDNIDL). The segment at 76 to 145 (KGIEYPPPEK…GSNAGNESLP (70 aa)) is disordered. The segment covering 87 to 99 (KKAHGKGKSSKRP) has biased composition (basic residues). Residues 111–121 (PSKTEPSTPST) are compositionally biased toward low complexity. In terms of domain architecture, MYST-type HAT spans 179 to 451 (ARIRNINKIC…NGDLLADWQP (273 aa)). The C2HC MYST-type zinc-finger motif lies at 212 to 237 (VYICSFCFCYYGSERQFQRHREKCTL). Residues 262-283 (RTWCRNICLLSKLFLDHKMLYY) carry the ESA1-RPD3 motif motif. The residue at position 279 (Lys-279) is an N6-acetyllysine; by autocatalysis. Acetyl-CoA contacts are provided by residues 320–324 (ACILT) and 329–335 (QRHGYGK). The active-site Proton donor/acceptor is Glu-355. Ser-359 is a binding site for acetyl-CoA.

It belongs to the MYST (SAS/MOZ) family. Component of the NuA4 histone acetyltransferase complex. Interacts with arp4. Autoacetylation at Lys-279 is required for proper function.

The protein resides in the nucleus. The protein localises to the chromosome. It carries out the reaction L-lysyl-[histone] + acetyl-CoA = N(6)-acetyl-L-lysyl-[histone] + CoA + H(+). It catalyses the reaction L-lysyl-[protein] + acetyl-CoA = N(6)-acetyl-L-lysyl-[protein] + CoA + H(+). The catalysed reaction is 2-hydroxyisobutanoyl-CoA + L-lysyl-[protein] = N(6)-(2-hydroxyisobutanoyl)-L-lysyl-[protein] + CoA + H(+). The enzyme catalyses (2E)-butenoyl-CoA + L-lysyl-[protein] = N(6)-(2E)-butenoyl-L-lysyl-[protein] + CoA + H(+). Catalytic component of the NuA4 histone acetyltransferase (HAT) complex which is involved in epigenetic transcriptional activation of selected genes principally by acetylation of nucleosomal histones H4, H3, H2B, H2A and H2A variant H2A.Z. Acetylates histone H4 to form H4K5ac, H4K8ac, H4K12ac and H4K16ac, histone H3 to form H3K14ac, and histone H2A to form H2AK4ac and H2AK7ac. The NuA4 complex is involved in the DNA damage response and is required for chromosome segregation. The NuA4 complex plays a direct role in repair of DNA double-strand breaks (DSBs) through homologous recombination. Recruitment to promoters depends on H3K4me. Also acetylates non-histone proteins. In addition to protein acetyltransferase, can use different acyl-CoA substrates, such as 2-hydroxyisobutanoyl-CoA (2-hydroxyisobutyryl-CoA) or (2E)-butenoyl-CoA (crotonyl-CoA), and is able to mediate protein 2-hydroxyisobutyrylation and crotonylation, respectively. The polypeptide is Histone acetyltransferase mst1 (Schizosaccharomyces pombe (strain 972 / ATCC 24843) (Fission yeast)).